Reading from the N-terminus, the 602-residue chain is Rho family-interacting cell polarization regulator 2 (602 aa).

The tract at residues 46-73 is disordered; that stretch reads KKPQAKVKKMHNLGHKNSTTPKEPQPKR. The segment covering 48 to 59 has biased composition (basic residues); sequence PQAKVKKMHNLG. Residues 83–112 adopt a coiled-coil conformation; sequence NGLDEYLEVHQTELDKLTAQLKDMRRNSRL. The segment at 173–421 is necessary for interaction with NCAM and myoblast protrusion formation; that stretch reads RESLTEINRS…TTAATQHRAL (249 aa). A disordered region spans residues 384-474; sequence GDLPYEDRVP…RSEVCQKPSN (91 aa). Residues 403 to 416 are compositionally biased toward polar residues; it reads AHVSSSPDITTAAT. A compositionally biased stretch (low complexity) spans 423–437; it reads SSESSSPDCSSSDSC.

The protein belongs to the RIPOR family. In terms of assembly, homooligomer; homooligomerization is regulated by RHOC and leads to the formation of concatemers through the association of N- and C-termini. Interacts with NCAM.

It is found in the cytoplasm. It localises to the cytoskeleton. Its subcellular location is the cell projection. The protein localises to the filopodium. The protein resides in the apical cell membrane. It is found in the stereocilium. It localises to the stereocilium membrane. Functionally, acts as an inhibitor of the small GTPase RHOA and plays several roles in the regulation of myoblast and hair cell differentiation, lymphocyte T proliferation and neutrophil polarization. Plays a role in fetal mononuclear myoblast differentiation by promoting filopodia and myotube formation. Maintains naive T lymphocytes in a quiescent state and prevents chemokine-induced T lymphocyte responses, such as cell adhesion, polarization and migration. Involved also in the regulation of neutrophil polarization, chemotaxis and adhesion. Required for normal development of inner and outer hair cell stereocilia within the cochlea of the inner ear. Plays a role for maintaining the structural organization of the basal domain of stereocilia. Involved in mechanosensory hair cell function. Required for normal hearing. The chain is Rho family-interacting cell polarization regulator 2 from Gallus gallus (Chicken).